Consider the following 105-residue polypeptide: Flagellar transcriptional regulator FlhD (105 aa).

It belongs to the FlhD family. In terms of assembly, homodimer; disulfide-linked. Forms a heterohexamer composed of two FlhC and four FlhD subunits. Each FlhC binds a FlhD dimer, forming a heterotrimer, and a hexamer assembles by dimerization of two heterotrimers.

The protein localises to the cytoplasm. Functions in complex with FlhC as a master transcriptional regulator that regulates transcription of several flagellar and non-flagellar operons by binding to their promoter region. Activates expression of class 2 flagellar genes, including fliA, which is a flagellum-specific sigma factor that turns on the class 3 genes. Also regulates genes whose products function in a variety of physiological pathways. This Cupriavidus necator (strain ATCC 17699 / DSM 428 / KCTC 22496 / NCIMB 10442 / H16 / Stanier 337) (Ralstonia eutropha) protein is Flagellar transcriptional regulator FlhD.